The following is a 343-amino-acid chain: Probable xyloglucan endotransglucosylase/hydrolase protein 30 (343 aa).

A signal peptide spans 1–23 (MSKSSYNHIFILILCLCLRSSSA). A GH16 domain is found at 24–224 (FTNLNTLSFE…YKFAPFVAEF (201 aa)). Glu-109 serves as the catalytic Nucleophile. The Proton donor role is filled by Glu-113. Residues Glu-113 and 126–128 (QTN) each bind xyloglucan. Residue Asn-132 is glycosylated (N-linked (GlcNAc...) asparagine). Xyloglucan-binding positions include 136-140 (HRGRE), 203-204 (DW), Gly-208, and Arg-285. Cys-280 and Cys-293 are disulfide-bonded. The segment at 306–343 (TGRLKFGGTEARERRRNRRQQRRPEIEIESDPDDRKLL) is disordered.

This sequence belongs to the glycosyl hydrolase 16 family. XTH group 3 subfamily. Post-translationally, contains at least one intrachain disulfide bond essential for its enzymatic activity. Predominantly expressed in green siliques.

It localises to the secreted. The protein resides in the cell wall. It is found in the extracellular space. Its subcellular location is the apoplast. It catalyses the reaction breaks a beta-(1-&gt;4) bond in the backbone of a xyloglucan and transfers the xyloglucanyl segment on to O-4 of the non-reducing terminal glucose residue of an acceptor, which can be a xyloglucan or an oligosaccharide of xyloglucan.. Its function is as follows. Catalyzes xyloglucan endohydrolysis (XEH) and/or endotransglycosylation (XET). Cleaves and religates xyloglucan polymers, an essential constituent of the primary cell wall, and thereby participates in cell wall construction of growing tissues. In Arabidopsis thaliana (Mouse-ear cress), this protein is Probable xyloglucan endotransglucosylase/hydrolase protein 30 (XTH30).